A 360-amino-acid polypeptide reads, in one-letter code: Phospho-N-acetylmuramoyl-pentapeptide-transferase (360 aa).

The next 10 helical transmembrane spans lie at 21 to 41 (YLTF…LWIG), 71 to 91 (TPTM…ILWA), 94 to 114 (SNPY…IGFI), 142 to 162 (LVVA…VLVV), 168 to 188 (IMPQ…VGAS), 199 to 219 (GLAI…AWAT), 236 to 256 (ASEL…FLWF), 263 to 283 (VFMG…IAVL), 288 to 308 (FLLF…ILQV), and 338 to 358 (VIVR…VTLK).

This sequence belongs to the glycosyltransferase 4 family. MraY subfamily. Mg(2+) serves as cofactor.

It localises to the cell inner membrane. The enzyme catalyses UDP-N-acetyl-alpha-D-muramoyl-L-alanyl-gamma-D-glutamyl-meso-2,6-diaminopimeloyl-D-alanyl-D-alanine + di-trans,octa-cis-undecaprenyl phosphate = di-trans,octa-cis-undecaprenyl diphospho-N-acetyl-alpha-D-muramoyl-L-alanyl-D-glutamyl-meso-2,6-diaminopimeloyl-D-alanyl-D-alanine + UMP. Its pathway is cell wall biogenesis; peptidoglycan biosynthesis. In terms of biological role, catalyzes the initial step of the lipid cycle reactions in the biosynthesis of the cell wall peptidoglycan: transfers peptidoglycan precursor phospho-MurNAc-pentapeptide from UDP-MurNAc-pentapeptide onto the lipid carrier undecaprenyl phosphate, yielding undecaprenyl-pyrophosphoryl-MurNAc-pentapeptide, known as lipid I. This is Phospho-N-acetylmuramoyl-pentapeptide-transferase from Tolumonas auensis (strain DSM 9187 / NBRC 110442 / TA 4).